Consider the following 320-residue polypeptide: MAQEPSFFVLAYYHFTAIADPHQEVKAHKEFFKDRNITSRIYLSEQGINGQMSGKREDAEAYMKWLHANPLFETMPFKIHSHHENVFPRQTVKYRKQLVALDEDVDMNQTGQHISPLEWKELLEKEKRPLLLDVRNEYEWQVGRFDGAECPPCDTFREFKEYAENLKTQVNPEQTPIMMYCTGGIRCELYSSLLKKEGFKEVYQLEGGIINYGLKQGSEHWLGKLFVFDDRLTIPISQEPAPVIGSCHHCQTSNETYYNCANMDCNHLYLCCQTCVEKFLGCCCTDCQNAPRVRPYHHQDVHKPFRKRHHYFKDDLTSKQ.

The Rhodanese domain occupies 125–221 (KEKRPLLLDV…YGLKQGSEHW (97 aa)). The active-site Cysteine persulfide intermediate is Cys181.

It belongs to the TrhO family.

The enzyme catalyses uridine(34) in tRNA + AH2 + O2 = 5-hydroxyuridine(34) in tRNA + A + H2O. Functionally, catalyzes oxygen-dependent 5-hydroxyuridine (ho5U) modification at position 34 in tRNAs. The protein is tRNA uridine(34) hydroxylase of Protochlamydia amoebophila (strain UWE25).